Consider the following 223-residue polypeptide: Rho-related protein racE (223 aa).

A GTP-binding site is contributed by glycine 18–threonine 25. Positions tyrosine 40–tyrosine 48 match the Effector region motif. GTP contacts are provided by residues aspartate 65–glutamine 69 and threonine 123–aspartate 126. The interval glycine 187–leucine 223 is disordered. Basic residues predominate over residues lysine 210 to leucine 223. Cysteine 220 bears the Cysteine methyl ester mark. Residue cysteine 220 is the site of S-geranylgeranyl cysteine attachment. The propeptide at isoleucine 221 to leucine 223 is removed in mature form.

This sequence belongs to the small GTPase superfamily. Rho family. Interacts with rgaA.

The protein resides in the cell membrane. In terms of biological role, specifically required for cytokinesis. The protein is Rho-related protein racE (racE) of Dictyostelium discoideum (Social amoeba).